We begin with the raw amino-acid sequence, 277 residues long: Zinc transporter ZupT (277 aa).

8 helical membrane passes run 7–27 (VLLA…GSAI), 38–58 (FLAV…FVEI), 73–93 (VLAS…IAVI), 133–155 (AGVL…AFSA), 165–187 (AIAV…PIYY), 196–216 (FLYS…GYVV), 220–240 (FFTP…MVYI), and 257–277 (LCIL…LLFL). Fe(2+)-binding residues include asparagine 145 and glutamate 148. Zn(2+)-binding residues include glutamate 148 and histidine 173. Fe(2+) contacts are provided by asparagine 174, glutamate 177, and glutamate 206. Glutamate 177 contacts Zn(2+).

Belongs to the ZIP transporter (TC 2.A.5) family. ZupT subfamily.

It localises to the cell inner membrane. It carries out the reaction Zn(2+)(in) = Zn(2+)(out). In terms of biological role, mediates zinc uptake. May also transport other divalent cations. The polypeptide is Zinc transporter ZupT (Nitratidesulfovibrio vulgaris (strain ATCC 29579 / DSM 644 / CCUG 34227 / NCIMB 8303 / VKM B-1760 / Hildenborough) (Desulfovibrio vulgaris)).